A 754-amino-acid polypeptide reads, in one-letter code: Ubiquitin carboxyl-terminal hydrolase 9 (754 aa).

Basic residues predominate over residues 1-14; that stretch reads MIKRWLSVNRKKSH. A disordered region spans residues 1-76; the sequence is MIKRWLSVNR…SKFSSQTDNL (76 aa). The segment covering 42–58 has biased composition (low complexity); it reads SIAKSPSAKSSTSSIPS. A USP domain is found at 134-667; sequence FGYENFGNTC…TAYVLFYKET (534 aa). Cys-143 serves as the catalytic Nucleophile. Residues 194-209 show a composition bias toward polar residues; that stretch reads ETSTNSGNSNTGYQSN. Positions 194–273 are disordered; it reads ETSTNSGNSN…DNNEMERPQP (80 aa). Residues 222–233 are compositionally biased toward low complexity; sequence QSDQDNSSSSTQ. Over residues 250-272 the composition is skewed to basic and acidic residues; the sequence is GKDKSNYKDSAKKDDNNEMERPQ. His-618 serves as the catalytic Proton acceptor. The disordered stretch occupies residues 726-754; sequence VKTAETKTPLNDKKRNKQKRKSRILSFIK. Basic and acidic residues predominate over residues 727–738; sequence KTAETKTPLNDK. Residues 739–748 show a composition bias toward basic residues; sequence KRNKQKRKSR.

Belongs to the peptidase C19 family.

The enzyme catalyses Thiol-dependent hydrolysis of ester, thioester, amide, peptide and isopeptide bonds formed by the C-terminal Gly of ubiquitin (a 76-residue protein attached to proteins as an intracellular targeting signal).. This Saccharomyces cerevisiae (strain ATCC 204508 / S288c) (Baker's yeast) protein is Ubiquitin carboxyl-terminal hydrolase 9 (UBP9).